The primary structure comprises 120 residues: Large ribosomal subunit protein uL18 (120 aa).

Belongs to the universal ribosomal protein uL18 family. Part of the 50S ribosomal subunit; part of the 5S rRNA/L5/L18/L25 subcomplex. Contacts the 5S and 23S rRNAs.

Its function is as follows. This is one of the proteins that bind and probably mediate the attachment of the 5S RNA into the large ribosomal subunit, where it forms part of the central protuberance. The polypeptide is Large ribosomal subunit protein uL18 (Acidiphilium cryptum (strain JF-5)).